Reading from the N-terminus, the 1989-residue chain is Zinc finger C3H1 domain-containing protein (1989 aa).

4 disordered regions span residues M1–F133, G148–E218, S251–K290, and L310–D365. A2 carries the N-acetylalanine modification. Phosphoserine is present on residues S15, S28, and S34. Residues G20 to N32 show a composition bias toward acidic residues. Residues N33–S44 show a composition bias toward low complexity. Residues R62–S72 are compositionally biased toward gly residues. Composition is skewed to low complexity over residues P114–S132, G183–E192, and K201–K210. Phosphoserine is present on S128. Residues N219–E259 adopt a coiled-coil conformation. Phosphoserine is present on S251. Basic and acidic residues predominate over residues S251–K262. The segment covering F266–K279 has biased composition (polar residues). Residues D280–K290 are compositionally biased toward basic and acidic residues. The span at K330–L340 shows a compositional bias: polar residues. Residues S352 and S383 each carry the phosphoserine modification. Residues S358 to K389 are a coiled coil. 2 disordered regions span residues K385 to S671 and L711 to L770. The segment covering Q392–T402 has biased composition (basic and acidic residues). Residues A430 to K440 show a composition bias toward basic residues. Residues R432 to R487 are a coiled coil. 2 stretches are compositionally biased toward basic and acidic residues: residues Q444–S479 and K501–P515. Acidic residues predominate over residues N527–S537. Positions V574–P583 are enriched in low complexity. The segment covering P594–P616 has biased composition (pro residues). Polar residues predominate over residues T647 to S671. Phosphoserine occurs at positions 662, 714, 717, and 719. Positions P755–L770 are enriched in basic and acidic residues. T766 carries the post-translational modification Phosphothreonine. A phosphoserine mark is found at S805 and S809. Residues L847–L909 adopt a coiled-coil conformation. Phosphoserine occurs at positions 948, 949, and 953. A coiled-coil region spans residues E965–L989. 2 positions are modified to phosphoserine: S998 and S1046. Residues F1185–D1206 form a C3H1-type zinc finger. Phosphoserine occurs at positions 1301, 1303, and 1304. 7 TPR repeats span residues V1361–N1400, P1401–Y1434, W1438–N1471, L1478–G1511, L1602–N1635, C1636–N1669, and P1745–C1778.

Component of the poly(A) tail exosome targeting (PAXT) complex made of accessory factors, such as PABPN1, ZFC3H1 and MTREX, and which directs a subset of long and polyadenylated poly(A) RNAs for exosomal degradation. Co-localizes with component of the CBC-ARS2 (CBCA) complex. Binds to RNA exosome components. Interacts with NCBP1/CBP80, ZC3H18, MTREX and PABPN1 in a RNase-insensitive manner, and with PABPC4, PABPC1 and ZC3H14 in a RNase-sensitive manner.

The protein localises to the nucleus. In terms of biological role, subunit of the trimeric poly(A) tail exosome targeting (PAXT) complex, a complex that directs a subset of long and polyadenylated poly(A) RNAs for exosomal degradation. The RNA exosome is fundamental for the degradation of RNA in eukaryotic nuclei. Substrate targeting is facilitated by its cofactor MTREX, which links to RNA-binding protein adapters. This chain is Zinc finger C3H1 domain-containing protein (ZFC3H1), found in Homo sapiens (Human).